The sequence spans 343 residues: Hydroxymethylglutaryl-CoA synthase (343 aa).

The (3S)-3-hydroxy-3-methylglutaryl-CoA site is built by D28 and A29. The Proton donor/acceptor role is filled by E80. C112 contacts (3S)-3-hydroxy-3-methylglutaryl-CoA. Catalysis depends on C112, which acts as the Acyl-thioester intermediate. R198 contributes to the CoA binding site. (3S)-3-hydroxy-3-methylglutaryl-CoA contacts are provided by T200 and H233. H233 acts as the Proton donor/acceptor in catalysis. CoA is bound at residue K238. 3 residues coordinate (3S)-3-hydroxy-3-methylglutaryl-CoA: R242, N265, and S295.

The protein belongs to the thiolase-like superfamily. Archaeal HMG-CoA synthase family. As to quaternary structure, interacts with acetoacetyl-CoA thiolase that catalyzes the precedent step in the pathway and with a DUF35 protein. The acetoacetyl-CoA thiolase/HMG-CoA synthase complex channels the intermediate via a fused CoA-binding site, which allows for efficient coupling of the endergonic thiolase reaction with the exergonic HMGCS reaction.

It catalyses the reaction acetoacetyl-CoA + acetyl-CoA + H2O = (3S)-3-hydroxy-3-methylglutaryl-CoA + CoA + H(+). Its pathway is metabolic intermediate biosynthesis; (R)-mevalonate biosynthesis; (R)-mevalonate from acetyl-CoA: step 2/3. Functionally, catalyzes the condensation of acetyl-CoA with acetoacetyl-CoA to form 3-hydroxy-3-methylglutaryl-CoA (HMG-CoA). Functions in the mevalonate (MVA) pathway leading to isopentenyl diphosphate (IPP), a key precursor for the biosynthesis of isoprenoid compounds that are building blocks of archaeal membrane lipids. This Archaeoglobus fulgidus (strain ATCC 49558 / DSM 4304 / JCM 9628 / NBRC 100126 / VC-16) protein is Hydroxymethylglutaryl-CoA synthase.